The following is a 404-amino-acid chain: Exodeoxyribonuclease 7 large subunit (404 aa).

It belongs to the XseA family. As to quaternary structure, heterooligomer composed of large and small subunits.

It is found in the cytoplasm. The enzyme catalyses Exonucleolytic cleavage in either 5'- to 3'- or 3'- to 5'-direction to yield nucleoside 5'-phosphates.. Its function is as follows. Bidirectionally degrades single-stranded DNA into large acid-insoluble oligonucleotides, which are then degraded further into small acid-soluble oligonucleotides. This chain is Exodeoxyribonuclease 7 large subunit, found in Caldanaerobacter subterraneus subsp. tengcongensis (strain DSM 15242 / JCM 11007 / NBRC 100824 / MB4) (Thermoanaerobacter tengcongensis).